Here is a 352-residue protein sequence, read N- to C-terminus: Carbohydrate sulfotransferase 11 (352 aa).

At 1-16 (MKQTILDLMRMSRICR) the chain is on the cytoplasmic side. A helical; Signal-anchor for type II membrane protein transmembrane segment spans residues 17 to 37 (MVLATCLGSFILVIFYFQSMF). Residues 38-352 (QPVMRRNPFA…YSIPSYLKLQ (315 aa)) are Lumenal-facing. 3'-phosphoadenylyl sulfate is bound by residues 124-130 (PKVACTN) and 186-194 (REPFERLVS). Asn-205, Asn-223, Asn-321, and Asn-342 each carry an N-linked (GlcNAc...) asparagine glycan.

The protein belongs to the sulfotransferase 2 family.

The protein localises to the golgi apparatus membrane. The catalysed reaction is chondroitin beta-D-glucuronate + n 3'-phosphoadenylyl sulfate = chondroitin 4'-sulfate + n adenosine 3',5'-bisphosphate + n H(+). In terms of biological role, catalyzes the transfer of sulfate to position 4 of the N-acetylgalactosamine (GalNAc) residue of chondroitin. This is Carbohydrate sulfotransferase 11 (chst11) from Danio rerio (Zebrafish).